The primary structure comprises 279 residues: Undecaprenyl-diphosphatase (279 aa).

8 helical membrane-spanning segments follow: residues 1-21 (MVLE…LPIS), 39-59 (GRFF…LYFF), 96-116 (LLLV…VRFV), 128-148 (FTMG…DALF), 155-175 (IFQI…FAII), 201-221 (FSFL…LVAG), 231-251 (YSLI…SALL), and 259-279 (FVLF…VSFF).

Belongs to the UppP family.

Its subcellular location is the cell membrane. It catalyses the reaction di-trans,octa-cis-undecaprenyl diphosphate + H2O = di-trans,octa-cis-undecaprenyl phosphate + phosphate + H(+). Functionally, catalyzes the dephosphorylation of undecaprenyl diphosphate (UPP). Confers resistance to bacitracin. The polypeptide is Undecaprenyl-diphosphatase (Tropheryma whipplei (strain TW08/27) (Whipple's bacillus)).